We begin with the raw amino-acid sequence, 270 residues long: Pantoate kinase (270 aa).

The protein belongs to the GHMP kinase family. PoK subfamily.

It carries out the reaction (R)-pantoate + ATP = (R)-4-phosphopantoate + ADP + H(+). It functions in the pathway cofactor biosynthesis; coenzyme A biosynthesis. Its function is as follows. Phosphorylates (R)-pantoate to form (R)-4-phosphopantoate in the CoA biosynthesis pathway. The polypeptide is Pantoate kinase (Methanocaldococcus jannaschii (strain ATCC 43067 / DSM 2661 / JAL-1 / JCM 10045 / NBRC 100440) (Methanococcus jannaschii)).